The chain runs to 518 residues: Gypsy retrotransposon integrase-like protein 1 (518 aa).

The region spanning 130-292 (QQHLPMVGNP…TPYFQMFNRN (163 aa)) is the Integrase catalytic domain. At Ser-498 the chain carries Phosphoserine.

This chain is Gypsy retrotransposon integrase-like protein 1 (Gin1), found in Mus musculus (Mouse).